The chain runs to 41 residues: Submaxillary gland androgen-regulated protein 2, isoform beta (41 aa).

The first 22 residues, 1-22, serve as a signal peptide directing secretion; it reads MKALYMVFVLWVLIGCFLRLLK.

The protein resides in the secreted. May play a role in protection or detoxification. This Mus musculus (Mouse) protein is Submaxillary gland androgen-regulated protein 2, isoform beta (Smr2).